A 978-amino-acid chain; its full sequence is Calsyntenin-1 (978 aa).

The signal sequence occupies residues 1 to 26 (MTFHKTFGYGCIVLICFELLFAGVET). At 27 to 876 (SSENDDEYLT…SFIHKAEGSH (850 aa)) the chain is on the extracellular side. Cadherin domains follow at residues 37 to 143 (QKEI…APTF) and 144 to 249 (LEPS…MPER). An N-linked (GlcNAc...) asparagine glycan is attached at N53. N-linked (GlcNAc...) asparagine glycans are attached at residues N304, N486, N608, and N823. A helical membrane pass occupies residues 877–897 (VTMLIILVSVFLAVLLCGVSI). Residues 898–978 (ARLKNNQKYI…EWDNSNIFQQ (81 aa)) lie on the Cytoplasmic side of the membrane. The interval 937–958 (ADVTSDASSESENSESEDEEAL) is disordered. Positions 948–957 (ENSESEDEEA) are enriched in acidic residues.

It belongs to the calsyntenin family.

The protein resides in the postsynaptic cell membrane. In terms of biological role, postsynaptic adhesion molecule that binds to presynaptic neurexins to mediate both excitatory and inhibitory synapse formation. Promotes synapse development by acting as a cell adhesion molecule at the postsynaptic membrane, which associates with neurexin-alpha at the presynaptic membrane. The polypeptide is Calsyntenin-1 (Cals) (Drosophila melanogaster (Fruit fly)).